A 91-amino-acid polypeptide reads, in one-letter code: Mercuric transport protein periplasmic component (91 aa).

A signal peptide spans 1–19; that stretch reads MKKLFASLALAAFVAPVFA. In terms of domain architecture, HMA spans 22–88; it reads QTVTLSVPGM…ATEDAGYPSS (67 aa). Hg(2+) contacts are provided by cysteine 33 and cysteine 36.

This sequence belongs to the MerP family. As to quaternary structure, monomer.

The protein localises to the periplasm. Its function is as follows. Involved in mercury resistance. Acts as a mercury scavenger that specifically binds to a mercuric ion in the periplasm and probably passes it to the cytoplasmic mercuric reductase MerA via the mercuric transport protein MerT. The chain is Mercuric transport protein periplasmic component from Acinetobacter calcoaceticus.